The primary structure comprises 278 residues: Dermonecrotic toxin LlSicTox-alphaIII3iii (278 aa).

H5 is an active-site residue. Mg(2+) contacts are provided by E25 and D27. H40 serves as the catalytic Nucleophile. A disulfide bridge connects residues C44 and C50. Position 84 (D84) interacts with Mg(2+).

It belongs to the arthropod phospholipase D family. Class I subfamily. The cofactor is Mg(2+). In terms of tissue distribution, expressed by the venom gland.

Its subcellular location is the secreted. The catalysed reaction is an N-(acyl)-sphingosylphosphocholine = an N-(acyl)-sphingosyl-1,3-cyclic phosphate + choline. It catalyses the reaction an N-(acyl)-sphingosylphosphoethanolamine = an N-(acyl)-sphingosyl-1,3-cyclic phosphate + ethanolamine. It carries out the reaction a 1-acyl-sn-glycero-3-phosphocholine = a 1-acyl-sn-glycero-2,3-cyclic phosphate + choline. The enzyme catalyses a 1-acyl-sn-glycero-3-phosphoethanolamine = a 1-acyl-sn-glycero-2,3-cyclic phosphate + ethanolamine. Functionally, dermonecrotic toxins cleave the phosphodiester linkage between the phosphate and headgroup of certain phospholipids (sphingolipid and lysolipid substrates), forming an alcohol (often choline) and a cyclic phosphate. This toxin acts on sphingomyelin (SM). It may also act on ceramide phosphoethanolamine (CPE), lysophosphatidylcholine (LPC) and lysophosphatidylethanolamine (LPE), but not on lysophosphatidylserine (LPS), and lysophosphatidylglycerol (LPG). It acts by transphosphatidylation, releasing exclusively cyclic phosphate products as second products. Induces dermonecrosis, hemolysis, increased vascular permeability, edema, inflammatory response, and platelet aggregation. This chain is Dermonecrotic toxin LlSicTox-alphaIII3iii, found in Loxosceles laeta (South American recluse spider).